The primary structure comprises 27 residues: Histone H1.3, embryonic (27 aa).

In terms of domain architecture, H15 spans 1–27 (HVVAAITALKERGGSSHQALKKYKAAN).

This sequence belongs to the histone H1/H5 family.

The protein resides in the nucleus. It is found in the chromosome. In terms of biological role, histones H1 are necessary for the condensation of nucleosome chains into higher-order structures. The sequence is that of Histone H1.3, embryonic from Parechinus angulosus (Angulate sea urchin).